The sequence spans 95 residues: Aspartyl/glutamyl-tRNA(Asn/Gln) amidotransferase subunit C (95 aa).

Belongs to the GatC family. Heterotrimer of A, B and C subunits.

The enzyme catalyses L-glutamyl-tRNA(Gln) + L-glutamine + ATP + H2O = L-glutaminyl-tRNA(Gln) + L-glutamate + ADP + phosphate + H(+). It carries out the reaction L-aspartyl-tRNA(Asn) + L-glutamine + ATP + H2O = L-asparaginyl-tRNA(Asn) + L-glutamate + ADP + phosphate + 2 H(+). Functionally, allows the formation of correctly charged Asn-tRNA(Asn) or Gln-tRNA(Gln) through the transamidation of misacylated Asp-tRNA(Asn) or Glu-tRNA(Gln) in organisms which lack either or both of asparaginyl-tRNA or glutaminyl-tRNA synthetases. The reaction takes place in the presence of glutamine and ATP through an activated phospho-Asp-tRNA(Asn) or phospho-Glu-tRNA(Gln). This is Aspartyl/glutamyl-tRNA(Asn/Gln) amidotransferase subunit C from Rhodopseudomonas palustris (strain TIE-1).